Here is a 208-residue protein sequence, read N- to C-terminus: Ribosomal RNA large subunit methyltransferase E (208 aa).

5 residues coordinate S-adenosyl-L-methionine: G62, W64, D82, D98, and D123. K163 functions as the Proton acceptor in the catalytic mechanism.

It belongs to the class I-like SAM-binding methyltransferase superfamily. RNA methyltransferase RlmE family.

It is found in the cytoplasm. The enzyme catalyses uridine(2552) in 23S rRNA + S-adenosyl-L-methionine = 2'-O-methyluridine(2552) in 23S rRNA + S-adenosyl-L-homocysteine + H(+). Specifically methylates the uridine in position 2552 of 23S rRNA at the 2'-O position of the ribose in the fully assembled 50S ribosomal subunit. The chain is Ribosomal RNA large subunit methyltransferase E from Edwardsiella ictaluri (strain 93-146).